The following is a 180-amino-acid chain: MFHATTILAYKGKNKSVIGGDGQVSFGNTVLKGNAIKIRKLNNGKVLAGFAGSTADAFNLFDMFENLLQSSKGDLLKAAIDFSKEWRKDKYLRKLEAMMLVLDRNHIFLLSGTGDVVEPEDGQIAAIGSGGNYALSAARALAKHANLDEEELVKSSLQIAGEICIYTNTNIKTYVIEDEK.

The active site involves Thr5. 3 residues coordinate Na(+): Gly161, Cys164, and Thr167.

It belongs to the peptidase T1B family. HslV subfamily. As to quaternary structure, a double ring-shaped homohexamer of HslV is capped on each side by a ring-shaped HslU homohexamer. The assembly of the HslU/HslV complex is dependent on binding of ATP.

It localises to the cytoplasm. It catalyses the reaction ATP-dependent cleavage of peptide bonds with broad specificity.. With respect to regulation, allosterically activated by HslU binding. Its function is as follows. Protease subunit of a proteasome-like degradation complex believed to be a general protein degrading machinery. This Campylobacter jejuni subsp. doylei (strain ATCC BAA-1458 / RM4099 / 269.97) protein is ATP-dependent protease subunit HslV.